We begin with the raw amino-acid sequence, 321 residues long: Probable pectate lyase A (321 aa).

The signal sequence occupies residues 1 to 18 (MKFVATLIACGLSGLALA). The N-linked (GlcNAc...) asparagine glycan is linked to asparagine 93. Aspartate 134, aspartate 163, and aspartate 167 together coordinate Ca(2+). Residue arginine 220 is part of the active site. N-linked (GlcNAc...) asparagine glycosylation occurs at asparagine 238.

The protein belongs to the polysaccharide lyase 1 family. Ca(2+) serves as cofactor.

The protein localises to the secreted. It catalyses the reaction Eliminative cleavage of (1-&gt;4)-alpha-D-galacturonan to give oligosaccharides with 4-deoxy-alpha-D-galact-4-enuronosyl groups at their non-reducing ends.. In terms of biological role, pectinolytic enzyme consist of four classes of enzymes: pectin lyase, polygalacturonase, pectin methylesterase and rhamnogalacturonase. Among pectinolytic enzymes, pectin lyase is the most important in depolymerization of pectin, since it cleaves internal glycosidic bonds of highly methylated pectins. Favors pectate, the anion, over pectin, the methyl ester. The polypeptide is Probable pectate lyase A (plyA) (Aspergillus fumigatus (strain ATCC MYA-4609 / CBS 101355 / FGSC A1100 / Af293) (Neosartorya fumigata)).